The sequence spans 313 residues: uncharacterized protein (313 aa).

The HTH deoR-type domain maps to 2-57 (KLERLLAMVVLLISKKQVQAAELAELFEVSVRTIYRDIETINRAGIPIVTSQGSGG). Residues 19–38 (VQAAELAELFEVSVRTIYRD) constitute a DNA-binding region (H-T-H motif). Residues 131–210 (HTEDQKTLRE…KDLAILHQTF (80 aa)) form the WYL domain.

It is found in the cytoplasm. This is an uncharacterized protein from Bacillus subtilis (strain 168).